The sequence spans 263 residues: Triosephosphate isomerase (263 aa).

10-12 (NWK) provides a ligand contact to substrate. The Electrophile role is filled by H104. The active-site Proton acceptor is the E176. Substrate contacts are provided by residues G182, S221, and 242–243 (GG).

The protein belongs to the triosephosphate isomerase family. Homodimer.

Its subcellular location is the cytoplasm. The enzyme catalyses D-glyceraldehyde 3-phosphate = dihydroxyacetone phosphate. It participates in carbohydrate biosynthesis; gluconeogenesis. It functions in the pathway carbohydrate degradation; glycolysis; D-glyceraldehyde 3-phosphate from glycerone phosphate: step 1/1. Involved in the gluconeogenesis. Catalyzes stereospecifically the conversion of dihydroxyacetone phosphate (DHAP) to D-glyceraldehyde-3-phosphate (G3P). The chain is Triosephosphate isomerase from Haemophilus influenzae (strain PittEE).